The following is a 913-amino-acid chain: WD repeat-containing protein 44 (913 aa).

A compositionally biased stretch (acidic residues) spans 1-14 (MASESDTEEFYDAP). Positions 1-24 (MASESDTEEFYDAPEDVHLGGGYP) are disordered. Residue Ala2 is modified to N-acetylalanine. The segment at 2–170 (ASESDTEEFY…SSTEQLNVLE (169 aa)) is binding activity. Ser3 carries the phosphoserine modification. Residues 9–15 (EFYDAPE) carry the FFAT-like motif motif. The residue at position 11 (Tyr11) is a Phosphotyrosine. Residues Ser27, Ser50, Ser66, Ser71, Ser81, Ser96, and Ser126 each carry the phosphoserine modification. The stretch at 119-184 (EESQKAESQN…VLNKEAVEVK (66 aa)) forms a coiled coil. Residues Thr158 and Thr219 each carry the phosphothreonine modification. A disordered region spans residues 205-348 (AVEEVAPAKP…RPRSNSGREL (144 aa)). The important for interaction with ARHGAP26 AND ARHGAP10 stretch occupies residues 211 to 257 (PAKPPRHLTPEPDIVASTKKPVPARPPPPTNFPPPRPPPPSRPAPPP). Residues 233–256 (PARPPPPTNFPPPRPPPPSRPAPP) are compositionally biased toward pro residues. Ser262 is subject to Phosphoserine. Residues 262-278 (SELEFETLKTPDIDVPK) are compositionally biased toward basic and acidic residues. Thr271 is subject to Phosphothreonine. Residues 280 to 311 (NITSDSLLTASMASESTVKDSQPSLDLASATS) show a composition bias toward polar residues. The important for interaction with RAB11A stretch occupies residues 334–347 (VMGPQRPRSNSGRE). Ser342 and Ser344 each carry phosphoserine; by PKB/AKT1. At Thr349 the chain carries Phosphothreonine. 2 disordered regions span residues 397-424 (SNDAAQSDDEEKLQSQPTDTDGGRLKQK) and 459-480 (DEVFHTDQDDPSSSDDEGMPYT). A phosphoserine mark is found at Ser403, Ser470, Ser471, and Ser472. The segment covering 467-476 (DDPSSSDDEG) has biased composition (acidic residues). Residue Tyr479 is modified to Phosphotyrosine. The WD 1 repeat unit spans residues 509–548 (EHMGAVWTMKFSHCGRLLASAGQDNVVRIWALKNAFDYFN). The interval 557-593 (EGRVSPSPSQESLSSSKSDTDTGVCSGTDEDPDDKNA) is disordered. Ser561 and Ser565 each carry phosphoserine. The segment covering 561–573 (SPSPSQESLSSSK) has biased composition (low complexity). 6 WD repeats span residues 605–643 (GHTADLLDLSWSKNYFLLSSSMDKTVRLWHISRRECLCC), 645–685 (QHID…VALW), 690–729 (GQTKLITAANFCQNGKYAVIGTYDGRCIFYDTEHLKYHTQ), 740–779 (KVGRKITGIEPLPGENKILVTSNDSRIRLYDLRDLSLSMK), 784–823 (VNSSSQIKASFSHDFTYLVSGSEDKYVYIWSTYHDLSKFT), and 876–913 (VLDATPSGIMKTDNTEVLLSADFTGAIKVFVNKRKNVS).

As to quaternary structure, interacts with the GTP-bound form of RAB11A and RAB11B. Interacts with GRAF1/ARHGAP26 or GRAF2/ARHGAP10; the interaction connects the endoplasmic reticulum (ER) with the endosomal tubule. Interacts (via FFAT-like motif) with VAPA (via MSP domain) or VAPB (via MSP domain); the interaction connects the ER with the endosomal tubule. Does not bind to RAB7, RAB10, RAB14, RAB35 and RAB8A. Phosphorylated by ATK1; the phosphorylation stabilizes its interaction with RAB11A and RAB11B.

It is found in the cytoplasm. It localises to the cytosol. Its subcellular location is the perinuclear region. The protein localises to the endosome membrane. The protein resides in the golgi apparatus. It is found in the trans-Golgi network. Downstream effector for Rab11 which regulates Rab11 intracellular membrane trafficking functions such as endocytic recycling, intracellular ciliogenesis and protein export. ATK1-mediated phosphorylation of WDR44 induces binding to Rab11 which activates endocytic recycling of transferrin receptor back to the plasma membrane. When bound to Rab11, prevents the formation of the ciliogenic Rab11-Rabin8/RAB3IP-RAB11FIP3 complex, therefore inhibiting preciliary trafficking and ciliogenesis. Participates in neo-synthesized protein export by connecting the endoplasmic reticulum (ER) with the endosomal tubule via direct interactions with the integral ER proteins VAPA or VAPB and the endosomal protein GRAFs (GRAF1/ARHGAP26 or GRAF2/ARHGAP10), which facilitates the transfer of proteins such as E-cadherin, MPP14 and CFTR into a Rab8-Rab10-Rab11-dependent export route. In Homo sapiens (Human), this protein is WD repeat-containing protein 44.